Here is a 1049-residue protein sequence, read N- to C-terminus: Cellulose synthase A catalytic subunit 4 [UDP-forming] (1049 aa).

At 1-215 the chain is on the cytoplasmic side; it reads MEPNTMASFD…ISSSKISPYR (215 aa). Zn(2+) is bound by residues cysteine 23, cysteine 26, cysteine 42, cysteine 45, cysteine 50, cysteine 53, cysteine 65, and cysteine 68. Residues 23–69 form an RING-type; degenerate zinc finger; sequence CKVCGDEVKDDDNGQTFVACHVCVYPVCKPCYEYERSNGNKCCPQCN. Residues 76-98 form a disordered region; that stretch reads KGSPKIAGDEENNGPDDSDDELN. The span at 84 to 96 shows a compositional bias: acidic residues; that stretch reads DEENNGPDDSDDE. A Phosphoserine modification is found at serine 135. A helical membrane pass occupies residues 216 to 236; sequence IVIVLRLVILVFFFRFRILTP. The Extracellular portion of the chain corresponds to 237–239; that stretch reads AKD. The chain crosses the membrane as a helical span at residues 240–260; it reads AYPLWLISVICEIWFALSWIL. The Cytoplasmic portion of the chain corresponds to 261-831; it reads DQFPKWFPIN…INTIVYPFTS (571 aa). The UDP-alpha-D-glucose site is built by serine 299, lysine 305, glutamate 306, and aspartate 335. Residue aspartate 335 is part of the active site. Positions 389 to 416 form a coiled coil; that stretch reads VKDRRAMKREYEEFKVRINALVAKAQKK. UDP-alpha-D-glucose is bound at residue lysine 476. Mn(2+) is bound by residues lysine 477 and aspartate 501. Aspartate 748 is a catalytic residue. A helical transmembrane segment spans residues 832 to 852; the sequence is IPLLAYCTIPAVCLLTGKFII. The Extracellular segment spans residues 853–857; that stretch reads PTINN. Residues 858–878 traverse the membrane as a helical segment; the sequence is FASIWFLALFLSIIATAILEL. Topologically, residues 879–895 are cytoplasmic; the sequence is RWSGVSINDLWRNEQFW. A helical membrane pass occupies residues 896 to 916; it reads VIGGVSAHLFAVFQGLLKVLF. Over 917 to 945 the chain is Extracellular; sequence GVDTNFTVTSKGASDEADEFGDLYLFKWT. An N-linked (GlcNAc...) asparagine glycan is attached at asparagine 921. The helical transmembrane segment at 946–966 threads the bilayer; the sequence is TLLIPPTTLIILNMVGVVAGV. Over 967-977 the chain is Cytoplasmic; that stretch reads SDAINNGYGSW. A helical membrane pass occupies residues 978–998; sequence GPLFGKLFFAFWVIVHLYPFL. The Extracellular portion of the chain corresponds to 999-1007; that stretch reads KGLMGRQNR. Residues 1008-1028 traverse the membrane as a helical segment; it reads TPTIVVLWSILLASIFSLVWV. The Cytoplasmic portion of the chain corresponds to 1029 to 1049; that stretch reads RIDPFLPKQTGPLLKQCGVDC.

The protein belongs to the glycosyltransferase 2 family. Plant cellulose synthase subfamily. As to quaternary structure, interacts with CESA7 and CESA8. Assembly with CESA7 and CESA8 is required for functional complex and localization in secondary cell wall deposition sites. Interacts with STL1 and STL2, but not with GOT1. The cofactor is Zn(2+). It depends on Mn(2+) as a cofactor. Post-translationally, S-acylated. As to expression, confined to secondary cell wall developing tissues such as xylems and interfascicular regions. Expressed in roots, hypocotyls, leaves, inflorescences and flowers.

The protein resides in the cell membrane. It catalyses the reaction [(1-&gt;4)-beta-D-glucosyl](n) + UDP-alpha-D-glucose = [(1-&gt;4)-beta-D-glucosyl](n+1) + UDP + H(+). Its pathway is glycan metabolism; plant cellulose biosynthesis. In terms of biological role, catalytic subunit of cellulose synthase terminal complexes ('rosettes'), required for beta-1,4-glucan microfibril crystallization, a major mechanism of the cell wall formation. Involved in the secondary cell wall formation. Required for the xylem cell wall thickening. In Arabidopsis thaliana (Mouse-ear cress), this protein is Cellulose synthase A catalytic subunit 4 [UDP-forming].